A 490-amino-acid polypeptide reads, in one-letter code: N-succinylglutamate 5-semialdehyde dehydrogenase (490 aa).

223–228 (GSSRTG) is a binding site for NAD(+). Active-site residues include E246 and C280.

Belongs to the aldehyde dehydrogenase family. AstD subfamily.

The catalysed reaction is N-succinyl-L-glutamate 5-semialdehyde + NAD(+) + H2O = N-succinyl-L-glutamate + NADH + 2 H(+). Its pathway is amino-acid degradation; L-arginine degradation via AST pathway; L-glutamate and succinate from L-arginine: step 4/5. Its function is as follows. Catalyzes the NAD-dependent reduction of succinylglutamate semialdehyde into succinylglutamate. This chain is N-succinylglutamate 5-semialdehyde dehydrogenase, found in Pseudoalteromonas atlantica (strain T6c / ATCC BAA-1087).